A 373-amino-acid chain; its full sequence is MSVKTKTITILPGDHVGTEIVNEAIKVLEAIEAATPYQKIHFDFKHHLIGGAAIDATGVPLPDDALESAKNSDAVLLGAVGGPKWGTGALRPEQGLLKIRKELNLYANIRPCNFASDSLLELSPLRPEVVKGTNLIIVRELVGGIYFGDREEQEESADKQTAWDTEKYTVDEVTRITRMAAFMALQHTPPLPIWSLDKANVLASSRLWRRTVDKVISEEFPTLSVQHQLIDSAAMILIQNPTKLNGIIITSNMFGDIISDEASVIPGSLGLLPSASLASLPDTNTAFGLYEPCHGSAPDLPANKVNPIATILSAASMLRLSLDCVKEAEALEEAVKQVLDKGIRTADLRGTSSTTEVGDAIVEAVTKILKEKA.

82–93 (GPKWGTGALRPE) is an NAD(+) binding site. Arginine 100, arginine 110, arginine 139, and aspartate 231 together coordinate substrate. Mg(2+)-binding residues include aspartate 231, aspartate 256, and aspartate 260. 295–306 (GSAPDLPANKVN) is a binding site for NAD(+).

This sequence belongs to the isocitrate and isopropylmalate dehydrogenases family. In terms of assembly, homodimer. The cofactor is Mg(2+). Mn(2+) is required as a cofactor.

It is found in the cytoplasm. It carries out the reaction (2R,3S)-3-isopropylmalate + NAD(+) = 4-methyl-2-oxopentanoate + CO2 + NADH. It participates in amino-acid biosynthesis; L-leucine biosynthesis; L-leucine from 3-methyl-2-oxobutanoate: step 3/4. Functionally, catalyzes the oxidation of 3-carboxy-2-hydroxy-4-methylpentanoate (3-isopropylmalate) to 3-carboxy-4-methyl-2-oxopentanoate. The product decarboxylates to 4-methyl-2 oxopentanoate. The sequence is that of 3-isopropylmalate dehydrogenase (LEU2) from Candida maltosa (Yeast).